The chain runs to 252 residues: 2-succinyl-6-hydroxy-2,4-cyclohexadiene-1-carboxylate synthase (252 aa).

This sequence belongs to the AB hydrolase superfamily. MenH family. In terms of assembly, monomer.

It catalyses the reaction 5-enolpyruvoyl-6-hydroxy-2-succinyl-cyclohex-3-ene-1-carboxylate = (1R,6R)-6-hydroxy-2-succinyl-cyclohexa-2,4-diene-1-carboxylate + pyruvate. The protein operates within quinol/quinone metabolism; 1,4-dihydroxy-2-naphthoate biosynthesis; 1,4-dihydroxy-2-naphthoate from chorismate: step 3/7. Its pathway is quinol/quinone metabolism; menaquinone biosynthesis. Its function is as follows. Catalyzes a proton abstraction reaction that results in 2,5-elimination of pyruvate from 2-succinyl-5-enolpyruvyl-6-hydroxy-3-cyclohexene-1-carboxylate (SEPHCHC) and the formation of 2-succinyl-6-hydroxy-2,4-cyclohexadiene-1-carboxylate (SHCHC). The chain is 2-succinyl-6-hydroxy-2,4-cyclohexadiene-1-carboxylate synthase from Salmonella heidelberg (strain SL476).